The sequence spans 155 residues: Small ribosomal subunit protein uS7c (155 aa).

The protein belongs to the universal ribosomal protein uS7 family. As to quaternary structure, part of the 30S ribosomal subunit.

It is found in the plastid. The protein localises to the chloroplast. In terms of biological role, one of the primary rRNA binding proteins, it binds directly to 16S rRNA where it nucleates assembly of the head domain of the 30S subunit. This Spirogyra maxima (Green alga) protein is Small ribosomal subunit protein uS7c (rps7).